The sequence spans 452 residues: CASP-like protein 4A1 (452 aa).

Residues 1 to 17 (MGLRDSLKEREDRRSSE) are compositionally biased toward basic and acidic residues. Disordered stretches follow at residues 1–39 (MGLR…RKES), 71–147 (RAGP…ARSS), and 164–283 (AKYV…VQFR). At 1 to 305 (MGLRDSLKER…KRRAAAMQRT (305 aa)) the chain is on the cytoplasmic side. The segment covering 25–34 (SWMTRESTTG) has biased composition (polar residues). 2 stretches are compositionally biased toward low complexity: residues 105–126 (QAQA…TGSG) and 190–205 (GWYS…AAPP). A compositionally biased stretch (pro residues) spans 211-272 (DPPPAPPRRQ…TAPAPAPVPA (62 aa)). Residues 306 to 326 (ALLARGAAAGLCLAALAVLAA) traverse the membrane as a helical segment. Residues 327-347 (DTRKGWARDSYSNYTQFRYSE) lie on the Extracellular side of the membrane. Asparagine 339 carries an N-linked (GlcNAc...) asparagine glycan. Residues 348-368 (AVNVIGFIYSVFQFVALVELM) form a helical membrane-spanning segment. At 369 to 389 (RRNKHLIPHPKRDLFDFTMDQ) the chain is on the cytoplasmic side. Residues 390 to 406 (VLTYLLISSSSSATARV) form a helical membrane-spanning segment. Over 407–423 (SDLIDNWGSDPFPSMAN) the chain is Extracellular. Residue asparagine 423 is glycosylated (N-linked (GlcNAc...) asparagine). A helical transmembrane segment spans residues 424–444 (GSIAISFLAFAVFAICSLISA). Topologically, residues 445 to 452 (YNLFRRDV) are cytoplasmic.

Belongs to the Casparian strip membrane proteins (CASP) family. As to quaternary structure, homodimer and heterodimers.

The protein resides in the cell membrane. In Sorghum bicolor (Sorghum), this protein is CASP-like protein 4A1.